We begin with the raw amino-acid sequence, 1404 residues long: Proteoglycan 4 (1404 aa).

A signal peptide spans 1–24 (MAWKTLPIYLLLLLSVFVIQQVSS). SMB domains lie at 26–69 (DLSS…AELS) and 66–108 (AELS…AEVH). Cystine bridges form between Cys30/Cys34, Cys30/Cys46, Cys34/Cys64, Cys44/Cys46, Cys44/Cys57, Cys50/Cys56, Cys57/Cys64, Cys70/Cys74, Cys70/Cys86, Cys74/Cys104, Cys84/Cys86, Cys84/Cys97, Cys90/Cys96, and Cys97/Cys104. Residues 111–966 (TSPPSSKKAP…TTQVTSTTTQ (856 aa)) form a disordered region. Ser123 and Ser136 each carry an O-linked (GalNAc...) serine glycan. The span at 132–146 (TTKRSPKPPNKKKTK) shows a compositional bias: basic residues. Residues 166-177 (SSSSSSSSSSSS) are compositionally biased toward low complexity. Residues 193–205 (ELQKKLKVKDNKK) show a composition bias toward basic and acidic residues. Asn206 is a glycosylation site (N-linked (GlcNAc...) asparagine). A compositionally biased stretch (polar residues) spans 235 to 252 (TPDTSTTQHNKVSTSPKI). 2 O-linked (GalNAc...) threonine glycosylation sites follow: Thr240 and Thr253. Polar residues predominate over residues 266 to 276 (PNSDTSKETSL). O-linked (GalNAc...) threonine glycans are attached at residues Thr277, Thr291, and Thr305. A glycan (O-linked (GalNAc...) serine) is linked at Ser306. O-linked (GalNAc...) threonine glycosylation occurs at Thr310. Residue Ser317 is glycosylated (O-linked (GalNAc...) serine). 3 O-linked (GalNAc...) threonine glycosylation sites follow: Thr324, Thr332, and Thr338. 2 stretches are compositionally biased toward low complexity: residues 329 to 348 (AKPT…TTPK) and 356 to 405 (KEPA…KEPA). Repeat unit 1 spans residues 348-355 (KEPTPTTP). The tract at residues 348-855 (KEPTPTTPKE…TPETPPPTTS (508 aa)) is 59 X 8 AA repeats of K-X-P-X-P-T-T-X. A 2; approximate repeat occupies 356–363 (KEPASTTP). Repeat 3 spans residues 364-371 (KEPTPTTI). O-linked (GalNAc...) threonine glycosylation occurs at Thr367. Residues 372–378 (KSAPTTP) form a 4; approximate repeat. O-linked (GalNAc...) serine glycosylation occurs at Ser373. O-linked (GalNAc...) threonine glycosylation is found at Thr376, Thr384, and Thr385. Copy 5 of the repeat occupies 379 to 386 (KEPAPTTT). One copy of the 6; approximate repeat lies at 387-393 (KSAPTTP). O-linked (GalNAc...) serine glycosylation occurs at Ser388. O-linked (GalNAc...) threonine glycosylation is found at Thr391, Thr399, Thr400, Thr407, Thr408, Thr415, and Thr423. Repeat copies occupy residues 394–401 (KEPAPTTT), 402–409 (KEPAPTTP), 410–417 (KEPAPTTT), and 418–425 (KEPAPTTT). Positions 413-431 (APTTTKEPAPTTTKSAPTT) are enriched in low complexity. Residues 426–432 (KSAPTTP) form an 11; approximate repeat. O-linked (GalNAc...) serine glycosylation occurs at Ser427. O-linked (GalNAc...) threonine glycans are attached at residues Thr430, Thr438, Thr439, Thr446, Thr447, Thr454, and Thr455. 2 stretches are compositionally biased toward pro residues: residues 432–467 (PKEP…PKEP) and 476–506 (PTTP…PKEP). 4 tandem repeats follow at residues 433 to 440 (KEPAPTTP), 441 to 448 (KKPAPTTP), 449 to 456 (KEPAPTTP), and 457 to 464 (KEPTPTTP). Residues 465 to 471 (KEPAPTT) form a 16; approximate repeat. Copy 17 of the repeat occupies 472-479 (KEPAPTTP). 8 O-linked (GalNAc...) threonine glycosylation sites follow: Thr477, Thr478, Thr485, Thr493, Thr494, Thr501, Thr502, and Thr509. The stretch at 480-487 (KEPAPTAP) is one 18; approximate repeat. One copy of the 19; approximate repeat lies at 488–495 (KKPAPTTP). 4 tandem repeats follow at residues 496-503 (KEPAPTTP), 504-511 (KEPAPTTT), 512-519 (KEPSPTTP), and 520-527 (KEPAPTTT). Over residues 523 to 561 (APTTTKSAPTTTKEPAPTTTKSAPTTPKEPSPTTTKEPA) the composition is skewed to low complexity. O-linked (GalNAc...) threonine glycosylation occurs at Thr525. A 24; approximate repeat occupies 528-534 (KSAPTTT). Ser529 is a glycosylation site (O-linked (GalNAc...) serine). 3 O-linked (GalNAc...) threonine glycosylation sites follow: Thr532, Thr540, and Thr541. The stretch at 535–542 (KEPAPTTT) is repeat 25. Residues 543 to 549 (KSAPTTP) form a 26; approximate repeat. 6 tandem repeats follow at residues 550–557 (KEPSPTTT), 558–565 (KEPAPTTP), 566–573 (KEPAPTTP), 574–581 (KKPAPTTP), 582–589 (KEPAPTTP), and 590–597 (KEPAPTTT). An O-linked (GalNAc...) serine glycan is attached at Ser553. 17 O-linked (GalNAc...) threonine glycosylation sites follow: Thr555, Thr563, Thr564, Thr571, Thr572, Thr579, Thr580, Thr587, Thr588, Thr595, Thr603, Thr604, Thr611, Thr612, Thr616, Thr619, and Thr627. A compositionally biased stretch (pro residues) spans 562-592 (PTTPKEPAPTTPKKPAPTTPKEPAPTTPKEP). Residues 598 to 605 (KKPAPTTP) form a 33; approximate repeat. Positions 602–611 (PTTPKEPAPT) are enriched in pro residues. Repeat unit 34 spans residues 606 to 613 (KEPAPTTP). A compositionally biased stretch (low complexity) spans 612–636 (TPKETAPTTPKKLTPTTPEKLAPTT). The 35; approximate repeat unit spans residues 614–621 (KETAPTTP). One copy of the 36; approximate repeat lies at 622–629 (KKLTPTTP). The stretch at 638 to 645 (EKPAPTTP) is one 37; approximate repeat. Residues 653–667 (PEEPTPTTPEEPAPT) are compositionally biased toward pro residues. One copy of the 38; approximate repeat lies at 662–669 (EEPAPTTP). 9 O-linked (GalNAc...) threonine glycosylation sites follow: Thr676, Thr683, Thr684, Thr691, Thr692, Thr699, Thr700, Thr704, and Thr707. Residues 677 to 699 (PKEPAPTTPKEPAPTTPKEPAPT) show a composition bias toward pro residues. A run of 3 repeats spans residues 678 to 685 (KEPAPTTP), 686 to 693 (KEPAPTTP), and 694 to 701 (KEPAPTTP). Over residues 700–721 (TPKETAPTTPKGTAPTTLKEPA) the composition is skewed to low complexity. One copy of the 42; approximate repeat lies at 702–709 (KETAPTTP). The 43; approximate repeat unit spans residues 710–717 (KGTAPTTL). Residues 718–725 (KEPAPTTP) form repeat 44. O-linked (GalNAc...) threonine glycosylation is found at Thr723, Thr724, and Thr736. A compositionally biased stretch (low complexity) spans 728-761 (PAPKELAPTTTKEPTSTTSDKPAPTTPKGTAPTT). The stretch at 731–738 (KELAPTTT) is one 45; approximate repeat. The 46; approximate repeat unit spans residues 739–746 (KEPTSTTS). The 47; approximate repeat unit spans residues 747 to 754 (DKPAPTTP). The 48; approximate repeat unit spans residues 755–762 (KGTAPTTP). Positions 762-776 (PKEPAPTTPKEPAPT) are enriched in pro residues. A run of 2 repeats spans residues 763 to 770 (KEPAPTTP) and 771 to 778 (KEPAPTTP). O-linked (GalNAc...) threonine glycosylation is found at Thr768, Thr769, Thr776, and Thr777. Residues 777–790 (TPKGTAPTTLKEPA) show a composition bias toward low complexity. Residues 779-786 (KGTAPTTL) form a 51; approximate repeat. Repeat unit 52 spans residues 787 to 794 (KEPAPTTP). Thr792, Thr793, and Thr805 each carry an O-linked (GalNAc...) threonine glycan. The segment covering 797–830 (PAPKELAPTTTKGPTSTTSDKPAPTTPKETAPTT) has biased composition (low complexity). A 53; approximate repeat occupies 800–807 (KELAPTTT). The stretch at 808–815 (KGPTSTTS) is one 54; approximate repeat. Residue Ser812 is glycosylated (O-linked (GalNAc...) serine). The stretch at 816–823 (DKPAPTTP) is one 55; approximate repeat. The stretch at 824–831 (KETAPTTP) is one 56; approximate repeat. O-linked (GalNAc...) threonine glycosylation is found at Thr829, Thr837, and Thr838. Residues 831–853 (PKEPAPTTPKKPAPTTPETPPPT) are compositionally biased toward pro residues. A run of 2 repeats spans residues 832–839 (KEPAPTTP) and 840–847 (KKPAPTTP). A 59; approximate repeat occupies 848-855 (ETPPPTTS). Residues 854 to 866 (TSEVSTPTTTKEP) show a composition bias toward low complexity. Ser892 carries an O-linked (GalNAc...) serine glycan. The segment covering 899–914 (PTTKTPAATKPEMTTT) has biased composition (low complexity). O-linked (GalNAc...) threonine glycosylation occurs at Thr900. Over residues 915 to 926 (AKDKTTERDLRT) the composition is skewed to basic and acidic residues. The segment covering 927-966 (TPETTTAAPKMTKETATTTEKTTESKITATTTQVTSTTTQ) has biased composition (low complexity). O-linked (GalNAc...) threonine glycosylation is found at Thr930 and Thr931. An O-linked (GalNAc...) serine glycan is attached at Ser962. Thr963, Thr968, Thr975, Thr978, Thr979, and Thr980 each carry an O-linked (GalNAc...) threonine glycan. The tract at residues 992–1104 (ITTTEIMNKP…EDAGGAEGET (113 aa)) is disordered. Residues 999–1012 (NKPEETAKPKDRAT) show a composition bias toward basic and acidic residues. A compositionally biased stretch (basic residues) spans 1026-1047 (KAPKKPTSTKKPKTMPRVRKPK). An O-linked (GalNAc...) threonine glycan is attached at Thr1039. The segment covering 1048–1060 (TTPTPRKMTSTMP) has biased composition (low complexity). A compositionally biased stretch (polar residues) spans 1073-1085 (LQTTTRPNQTPNS). Residues Cys1146 and Cys1403 are joined by a disulfide bond. 2 Hemopexin repeats span residues 1148-1191 (GKPV…VWGI) and 1192-1239 (PSPI…FGGL). An N-linked (GlcNAc...) asparagine glycan is attached at Asn1159. O-linked (GalNAc...) threonine glycosylation occurs at Thr1161.

As to quaternary structure, homodimer; disulfide-linked. In terms of processing, N-glycosylated. O-glycosylated; contains glycosaminoglycan chondroitin sulfate and keratan sulfate. O-glycosylated with sialylated oligosaccharides which are predominantly represented by the monosialylated core type I structure, NeuNAcalpha2-3Galbeta1-3GalNAc, with smaller amounts of disialylated O-glycans. Post-translationally, the disulfide bond between Cys-1146 and Cys-1403 is essential for protein cleavage. In terms of processing, proteolytically cleaved by cathepsin CTSG. In terms of tissue distribution, highly expressed in synovial tissue, cartilage and liver and weakly in heart and lung. Isoform B is expressed in kidney, lung, liver, heart and brain. Isoform C and isoform D are widely expressed.

The protein localises to the secreted. Functionally, plays a role in boundary lubrication within articulating joints. Prevents protein deposition onto cartilage from synovial fluid by controlling adhesion-dependent synovial growth and inhibiting the adhesion of synovial cells to the cartilage surface. Its function is as follows. Isoform F plays a role as a growth factor acting on the primitive cells of both hematopoietic and endothelial cell lineages. The sequence is that of Proteoglycan 4 (PRG4) from Homo sapiens (Human).